Here is a 124-residue protein sequence, read N- to C-terminus: MNLIKQFEQEQIKKLTQGKSIPNFRPGDTVKVNLRIIEGANERIQAYQGVVIARANRSISSSFTVRKISHGQGIERKFMLYSPLISSIELIKQGVVRRAKLYYLRNLQGRKAKIREKIFSKDNQ.

The protein belongs to the bacterial ribosomal protein bL19 family.

This protein is located at the 30S-50S ribosomal subunit interface and may play a role in the structure and function of the aminoacyl-tRNA binding site. The protein is Large ribosomal subunit protein bL19 of Orientia tsutsugamushi (strain Ikeda) (Rickettsia tsutsugamushi).